Consider the following 98-residue polypeptide: MSMVYINIFLAFTLSFMGLLIYRSHLMSSLLCLEGMMLSLFVLMTVTILSNHFTLASMAPIILLVFAACEAALGLSLLVMVSNTYGTDYVQNLNLLQC.

3 helical membrane-spanning segments follow: residues 1–21 (MSMVYINIFLAFTLSFMGLLI), 29–49 (SLLCLEGMMLSLFVLMTVTIL), and 61–81 (IILLVFAACEAALGLSLLVMV).

This sequence belongs to the complex I subunit 4L family. In terms of assembly, core subunit of respiratory chain NADH dehydrogenase (Complex I) which is composed of 45 different subunits.

The protein localises to the mitochondrion inner membrane. The catalysed reaction is a ubiquinone + NADH + 5 H(+)(in) = a ubiquinol + NAD(+) + 4 H(+)(out). Functionally, core subunit of the mitochondrial membrane respiratory chain NADH dehydrogenase (Complex I) which catalyzes electron transfer from NADH through the respiratory chain, using ubiquinone as an electron acceptor. Part of the enzyme membrane arm which is embedded in the lipid bilayer and involved in proton translocation. The chain is NADH-ubiquinone oxidoreductase chain 4L (MT-ND4L) from Taxidea taxus (American badger).